Here is a 356-residue protein sequence, read N- to C-terminus: Nicotinate-nucleotide--dimethylbenzimidazole phosphoribosyltransferase (356 aa).

E317 functions as the Proton acceptor in the catalytic mechanism.

It belongs to the CobT family. In terms of assembly, homodimer.

The catalysed reaction is 5,6-dimethylbenzimidazole + nicotinate beta-D-ribonucleotide = alpha-ribazole 5'-phosphate + nicotinate + H(+). The protein operates within nucleoside biosynthesis; alpha-ribazole biosynthesis; alpha-ribazole from 5,6-dimethylbenzimidazole: step 1/2. Functionally, catalyzes the synthesis of alpha-ribazole-5'-phosphate from nicotinate mononucleotide (NAMN) and 5,6-dimethylbenzimidazole (DMB). The protein is Nicotinate-nucleotide--dimethylbenzimidazole phosphoribosyltransferase of Salmonella agona (strain SL483).